Reading from the N-terminus, the 168-residue chain is MPISQKNQNFIDRTFSIIANILLRIIPTTSGEKEAFAYYINGMSAQSEGNYAEALQNYYQAMHLEMDPYDRSYILYNIGIIHTSNGEHSKALEYYCRAIERNPFLPQAFNNMAVICHYRGEQAIQQGDSEIAEAWFDQAAEYWKQARTLTPGNYIEAQNWLTITWRSK.

TPR repeat units follow at residues A35–P68, S72–L105, and G120–N153.

Belongs to the Ycf3 family.

The protein resides in the plastid membrane. Functionally, essential for the assembly of the photosystem I (PSI) complex. May act as a chaperone-like factor to guide the assembly of the PSI subunits. This is Photosystem I assembly protein Ycf3 from Cuscuta gronovii (Common dodder).